A 964-amino-acid polypeptide reads, in one-letter code: Glycine dehydrogenase (decarboxylating) (964 aa).

Residues 1–11 (MNSTLQNQTKT) show a composition bias toward polar residues. Positions 1–21 (MNSTLQNQTKTNLEKVGTDPL) are disordered. The residue at position 713 (lysine 713) is an N6-(pyridoxal phosphate)lysine.

It belongs to the GcvP family. The glycine cleavage system is composed of four proteins: P, T, L and H. Pyridoxal 5'-phosphate serves as cofactor.

It catalyses the reaction N(6)-[(R)-lipoyl]-L-lysyl-[glycine-cleavage complex H protein] + glycine + H(+) = N(6)-[(R)-S(8)-aminomethyldihydrolipoyl]-L-lysyl-[glycine-cleavage complex H protein] + CO2. In terms of biological role, the glycine cleavage system catalyzes the degradation of glycine. The P protein binds the alpha-amino group of glycine through its pyridoxal phosphate cofactor; CO(2) is released and the remaining methylamine moiety is then transferred to the lipoamide cofactor of the H protein. This chain is Glycine dehydrogenase (decarboxylating), found in Leptospira interrogans serogroup Icterohaemorrhagiae serovar Lai (strain 56601).